The chain runs to 289 residues: tRNA dimethylallyltransferase (289 aa).

Position 9-16 (9-16 (GTTASGKT)) interacts with ATP. 11–16 (TASGKT) lines the substrate pocket. The segment at 34–37 (DSLC) is interaction with substrate tRNA.

The protein belongs to the IPP transferase family. Monomer. Mg(2+) is required as a cofactor.

It carries out the reaction adenosine(37) in tRNA + dimethylallyl diphosphate = N(6)-dimethylallyladenosine(37) in tRNA + diphosphate. Its function is as follows. Catalyzes the transfer of a dimethylallyl group onto the adenine at position 37 in tRNAs that read codons beginning with uridine, leading to the formation of N6-(dimethylallyl)adenosine (i(6)A). This is tRNA dimethylallyltransferase from Campylobacter jejuni subsp. doylei (strain ATCC BAA-1458 / RM4099 / 269.97).